The chain runs to 426 residues: MAFQIPRGTQDLLPGETEKWQYVEQVARDLCRRYGYEEIRTPIFEHTELFLRGVGDTTDIVQKEMYTFEDKGGRALTLRPEGTAPVVRAFVEHKLYGSPNQPVKLYYAGPMFRYERPEAGRFRQFVQFGVEAIGSSDPAIDAEVMALAMHIYKALGLKHIRLVINSLGDVDSRRAHREALVRHFSDRIHELCPDCQARLETNPLRILDCKKDRDHELMASAPSILDYLNDESSAYFEKVKQYLTMLDIPFVIDSRLVRGLDYYNHTTFEIMSEAEGFGAAATLCGGGRYNGLVQEIGGPETPGIGFALSIERLLAALEAEGIELPIHRGIDCYVVAVGERAKDETVRLVYELRRAGLRVEQDYLGRKMKAQLKAADRLGASFVAIIGDEELEKQTAAVKHMASGEQTDVPLGELASFLIERTKREE.

Belongs to the class-II aminoacyl-tRNA synthetase family. In terms of assembly, homodimer.

The protein resides in the cytoplasm. It catalyses the reaction tRNA(His) + L-histidine + ATP = L-histidyl-tRNA(His) + AMP + diphosphate + H(+). The chain is Histidine--tRNA ligase from Geobacillus thermodenitrificans (strain NG80-2).